A 156-amino-acid chain; its full sequence is Ribonuclease pancreatic (156 aa).

An N-terminal signal peptide occupies residues 1-28 (MALEKSLVLLPLLVLALLVLGWIQPSLG). The substrate site is built by K35 and R38. H40 (proton acceptor) is an active-site residue. 4 cysteine pairs are disulfide-bonded: C54-C112, C68-C123, C86-C138, and C93-C100. An N-linked (GlcNAc...) asparagine glycan is attached at N62. Residue 69 to 73 (KPVNT) coordinates substrate. N90 carries an N-linked (GlcNAc...) asparagine glycan. A substrate-binding site is contributed by K94. N104 is a glycosylation site (N-linked (GlcNAc...) asparagine). R113 provides a ligand contact to substrate. Catalysis depends on H147, which acts as the Proton donor.

The protein belongs to the pancreatic ribonuclease family. In terms of assembly, monomer. Interacts with and forms tight 1:1 complexes with RNH1. Dimerization of two such complexes may occur. Interaction with RNH1 inhibits this protein.

It localises to the secreted. It carries out the reaction an [RNA] containing cytidine + H2O = an [RNA]-3'-cytidine-3'-phosphate + a 5'-hydroxy-ribonucleotide-3'-[RNA].. The enzyme catalyses an [RNA] containing uridine + H2O = an [RNA]-3'-uridine-3'-phosphate + a 5'-hydroxy-ribonucleotide-3'-[RNA].. Endonuclease that catalyzes the cleavage of RNA on the 3' side of pyrimidine nucleotides. Acts on single-stranded and double-stranded RNA. The sequence is that of Ribonuclease pancreatic (RNASE1) from Lemur catta (Ring-tailed lemur).